The primary structure comprises 342 residues: P2Y purinoceptor 12 (342 aa).

Residues 1–27 lie on the Extracellular side of the membrane; sequence MQAIDNLTSAPGNTSLCTRDYKITQVL. N-linked (GlcNAc...) asparagine glycans are attached at residues N6 and N13. Intrachain disulfides connect C17–C270 and C97–C175. The helical transmembrane segment at 28–50 threads the bilayer; that stretch reads FPLLYTVLFFVGLITNSLAMRIF. Topologically, residues 51–61 are cytoplasmic; sequence FQIRSKSNFII. A phosphoserine mark is found at S55 and S57. Residues 62 to 82 traverse the membrane as a helical segment; that stretch reads FLKNTVISDLLMILTFPFKIL. Residues 83–97 are Extracellular-facing; sequence SDAKLGAGPLRTFVC. The ADP site is built by R93, C97, and Y105. A helical transmembrane segment spans residues 98–118; the sequence is QVTSVIFYFTMYISISFLGLI. The Cytoplasmic segment spans residues 119–142; the sequence is TIDRYQKTTRPFKTSNPKNLLGAK. Residues 143–162 traverse the membrane as a helical segment; sequence ILSVLIWAFMFLLSLPNMIL. ADP-binding positions include 156–159, 175–179, H187, and N191; these read SLPN and CSFLK. The Extracellular portion of the chain corresponds to 163–185; it reads TNRRPRDKNVKKCSFLKSEFGLV. Residues 186 to 207 form a helical membrane-spanning segment; the sequence is WHEIVNYICQVIFWINFLIVIV. Residues 208-233 are Cytoplasmic-facing; the sequence is CYTLITKELYRSYVRTRGVGKVPRKK. A helical transmembrane segment spans residues 234 to 259; the sequence is VNVKVFIIIAVFFICFVPFHFARIPY. Residues 256–259, Q263, and K280 each bind ADP; that span reads RIPY. The Extracellular portion of the chain corresponds to 260-278; that stretch reads TLSQTRDVFDCAAENTLFY. The chain crosses the membrane as a helical span at residues 279-298; sequence VKESTLWLTSLNACLDPFIY. The Cytoplasmic segment spans residues 299–342; that stretch reads FFLCKSFRNSLISMLKCPNSATSQSQDNRKKEQDGGDPNEETPM. The tract at residues 317 to 342 is disordered; sequence NSATSQSQDNRKKEQDGGDPNEETPM. Residues 333-342 are compositionally biased toward acidic residues; sequence GGDPNEETPM.

This sequence belongs to the G-protein coupled receptor 1 family.

The protein resides in the cell membrane. Functionally, receptor for ADP and ATP coupled to G-proteins that inhibit the adenylyl cyclase second messenger system. Required for normal platelet aggregation and blood coagulation. This is P2Y purinoceptor 12 (P2RY12) from Macaca fascicularis (Crab-eating macaque).